Reading from the N-terminus, the 228-residue chain is Small ribosomal subunit protein uS3 (228 aa).

A KH type-2 domain is found at 39–107 (VREYLQDKLK…PVHINIEEIR (69 aa)).

It belongs to the universal ribosomal protein uS3 family. As to quaternary structure, part of the 30S ribosomal subunit. Forms a tight complex with proteins S10 and S14.

Its function is as follows. Binds the lower part of the 30S subunit head. Binds mRNA in the 70S ribosome, positioning it for translation. This is Small ribosomal subunit protein uS3 from Pseudomonas aeruginosa (strain UCBPP-PA14).